A 177-amino-acid polypeptide reads, in one-letter code: Protein C2-DOMAIN ABA-RELATED 4 (177 aa).

Positions 4 to 118 constitute a C2 domain; it reads ACPARTSSLM…LRMQLDGLPS (115 aa). Ca(2+) contacts are provided by Arg-33, Asp-34, Asp-39, Asp-85, His-86, Asp-87, and Asp-93.

Belongs to the plant CAR protein family. In terms of assembly, dimers and oligomers. Binds to PYR/PYL/RCAR abscisic acid intracellular receptors in an ABA-independent manner, both at the plasma membrane and in the nucleus. Interacts directly with PYR1, PYL1, PYL4, PYL6 and PYL8. Binds phospholipids in a Ca(2+)-dependent manner. Interacts with YchF1. Ca(2+) serves as cofactor.

It is found in the cell membrane. The protein resides in the nucleus. Its subcellular location is the cytoplasm. The protein localises to the cytosol. Its function is as follows. Mediates the transient calcium-dependent interaction of PYR/PYL/RCAR abscisic acid (ABA) receptors with the plasma membrane and thus regulates ABA sensitivity. Stimulates the GTPase/ATPase activities of YchF1, and regulates its subcellular localization. Promotes tolerance towards salinity stress by limiting the accumulation of reactive oxygen species (ROS). Promotes resistance to bacterial pathogens (e.g. Xanthomonas oryzae pv. oryzae and P.syringae pv. tomato DC3000). Binds liposomes in the absence of exogenous Ca(2+), but this activity is enhanced in the presence of Ca(2+) and generates membrane curvature. This chain is Protein C2-DOMAIN ABA-RELATED 4, found in Arabidopsis thaliana (Mouse-ear cress).